Here is a 1432-residue protein sequence, read N- to C-terminus: Probable ATP-dependent RNA helicase spindle-E (1432 aa).

The 168-residue stretch at 125 to 292 folds into the Helicase ATP-binding domain; that stretch reads MKAIRENTVV…FATKNGIPPV (168 aa). 138–145 contributes to the ATP binding site; that stretch reads GETGCGKT. The DEAH box motif lies at 238–241; that stretch reads DEVH. Residues 342–525 enclose the Helicase C-terminal domain; sequence VIDNMERRTE…SSVLKAKELN (184 aa). Residues 936–999 form the Tudor domain; it reads AGSITKNLKL…RFMSNQLKRE (64 aa).

This sequence belongs to the DEAD box helicase family. DEAH subfamily.

It is found in the cytoplasm. It carries out the reaction ATP + H2O = ADP + phosphate + H(+). Probable ATP-binding RNA helicase which plays a central role during spermatogenesis and oogenesis by repressing transposable elements and preventing their mobilization, which is essential for the germline integrity. Acts via the piRNA metabolic process, which mediates the repression of transposable elements during meiosis by forming complexes composed of piRNAs and Piwi and govern the methylation and subsequent repression of transposons. Involved in the repression of LTR retrotransposon copia. Also involved in telomere regulation by repressing specialized telomeric retroelements HeT-A, TAHRE, and TART; Drosophila telomeres being maintained by transposition of specialized telomeric retroelements. Involved in telomeric trans-silencing, a repression mechanism by which a transposon or a transgene inserted in subtelomeric heterochromatin has the capacity to repress in trans in the female germline, a homologous transposon, or transgene located in euchromatin. Involved in the repression of testis-expressed Stellate genes by the homologous Su(Ste) repeats. Required for anteroposterior and dorsoventral axis formation during oogenesis. This Drosophila willistoni (Fruit fly) protein is Probable ATP-dependent RNA helicase spindle-E (spn-E).